A 501-amino-acid chain; its full sequence is Cytochrome P450 90A4 (501 aa).

A helical transmembrane segment spans residues Ala2–Leu22. A heme-binding site is contributed by Cys446.

It belongs to the cytochrome P450 family. It depends on heme as a cofactor. Highly expressed in shoot apex and inflorenscence. Expressed in roots, stems, leaf blades and leaf sheaths.

Its subcellular location is the cell membrane. The protein operates within plant hormone biosynthesis; brassinosteroid biosynthesis. Catalyzes the C23-alpha-hydroxylation step in brassinosteroid biosynthesis. Converts 6-deoxocathasterone to 6-deoxoteasterone in the late C6-oxidation pathway and cathasterone to teasterone (TE) in the early C6-oxidation pathway of brassinolide (BL) biosynthesis. The protein is Cytochrome P450 90A4 of Oryza sativa subsp. japonica (Rice).